A 290-amino-acid polypeptide reads, in one-letter code: ATP synthase gamma chain (290 aa).

Belongs to the ATPase gamma chain family. As to quaternary structure, F-type ATPases have 2 components, CF(1) - the catalytic core - and CF(0) - the membrane proton channel. CF(1) has five subunits: alpha(3), beta(3), gamma(1), delta(1), epsilon(1). CF(0) has three main subunits: a, b and c.

The protein localises to the cell membrane. Produces ATP from ADP in the presence of a proton gradient across the membrane. The gamma chain is believed to be important in regulating ATPase activity and the flow of protons through the CF(0) complex. In Roseiflexus castenholzii (strain DSM 13941 / HLO8), this protein is ATP synthase gamma chain.